The primary structure comprises 177 residues: Large ribosomal subunit protein uL6 (177 aa).

The protein belongs to the universal ribosomal protein uL6 family. Part of the 50S ribosomal subunit.

Its function is as follows. This protein binds to the 23S rRNA, and is important in its secondary structure. It is located near the subunit interface in the base of the L7/L12 stalk, and near the tRNA binding site of the peptidyltransferase center. This Buchnera aphidicola subsp. Acyrthosiphon kondoi (Acyrthosiphon kondoi symbiotic bacterium) protein is Large ribosomal subunit protein uL6.